Consider the following 229-residue polypeptide: Demethylmenaquinone methyltransferase (229 aa).

S-adenosyl-L-methionine contacts are provided by residues Thr-58, Asp-78, and 100–101; that span reads DA.

The protein belongs to the class I-like SAM-binding methyltransferase superfamily. MenG/UbiE family.

It carries out the reaction a 2-demethylmenaquinol + S-adenosyl-L-methionine = a menaquinol + S-adenosyl-L-homocysteine + H(+). Its pathway is quinol/quinone metabolism; menaquinone biosynthesis; menaquinol from 1,4-dihydroxy-2-naphthoate: step 2/2. In terms of biological role, methyltransferase required for the conversion of demethylmenaquinol (DMKH2) to menaquinol (MKH2). The polypeptide is Demethylmenaquinone methyltransferase (Thermotoga maritima (strain ATCC 43589 / DSM 3109 / JCM 10099 / NBRC 100826 / MSB8)).